The chain runs to 270 residues: F420 non-reducing hydrogenase II cytochrome subunit (270 aa).

5 helical membrane-spanning segments follow: residues 27-47 (AIAM…WEFM), 57-77 (MIAV…NIFS), 139-159 (ILIP…IVLY), 173-193 (WIIS…VGFL), and 195-215 (VLHL…VGIL).

The protein belongs to the HupC/HyaC/HydC family. Composed of a large subunit (VhtA), a small subunit (VhtG) and a cytochrome subunit (VhtC). The cofactor is heme b.

It localises to the cell membrane. It catalyses the reaction methanophenazine + H2 = dihydromethanophenazine. In terms of biological role, part of the F420 non-reducing hydrogenase II complex that catalyzes the reduction of methanophenazine to dihydromethanophenazine. This Methanosarcina mazei (strain ATCC BAA-159 / DSM 3647 / Goe1 / Go1 / JCM 11833 / OCM 88) (Methanosarcina frisia) protein is F420 non-reducing hydrogenase II cytochrome subunit.